The primary structure comprises 170 residues: MSGVKFNIGKIVNTHGIRGEVKVVRITDFEDRFDPGNTVYLQDNKEYKPLVIATHRVHKGFDLLQFKGYGNINEVEAFKGLMLSIDEDQLTDLEEDAYYYHEIVGCKVVTSEGEELGKVKEILSPGANDVWVVQRMNAKDLLIPYIEQVVKQVDIENKIIKVQLMEGMLD.

Residues 95–168 (EDAYYYHEIV…IIKVQLMEGM (74 aa)) form the PRC barrel domain.

This sequence belongs to the RimM family. As to quaternary structure, binds ribosomal protein uS19.

The protein resides in the cytoplasm. In terms of biological role, an accessory protein needed during the final step in the assembly of 30S ribosomal subunit, possibly for assembly of the head region. Essential for efficient processing of 16S rRNA. May be needed both before and after RbfA during the maturation of 16S rRNA. It has affinity for free ribosomal 30S subunits but not for 70S ribosomes. The sequence is that of Ribosome maturation factor RimM from Oceanobacillus iheyensis (strain DSM 14371 / CIP 107618 / JCM 11309 / KCTC 3954 / HTE831).